The following is a 282-amino-acid chain: 4-diphosphocytidyl-2-C-methyl-D-erythritol kinase (282 aa).

Lys-9 is a catalytic residue. Residue 98 to 108 (PMGGGLGGGSS) coordinates ATP. Asp-140 is a catalytic residue.

Belongs to the GHMP kinase family. IspE subfamily. In terms of assembly, homodimer.

The enzyme catalyses 4-CDP-2-C-methyl-D-erythritol + ATP = 4-CDP-2-C-methyl-D-erythritol 2-phosphate + ADP + H(+). It functions in the pathway isoprenoid biosynthesis; isopentenyl diphosphate biosynthesis via DXP pathway; isopentenyl diphosphate from 1-deoxy-D-xylulose 5-phosphate: step 3/6. In terms of biological role, catalyzes the phosphorylation of the position 2 hydroxy group of 4-diphosphocytidyl-2C-methyl-D-erythritol. This Salmonella paratyphi B (strain ATCC BAA-1250 / SPB7) protein is 4-diphosphocytidyl-2-C-methyl-D-erythritol kinase.